The chain runs to 147 residues: Large ribosomal subunit protein uL15 (147 aa).

Residues 1-15 (MTDRVKKTRKLRGHV) are compositionally biased toward basic residues. The interval 1–34 (MTDRVKKTRKLRGHVSHGYGRVGKHRKHSGGRGL) is disordered.

Belongs to the universal ribosomal protein uL15 family.

The polypeptide is Large ribosomal subunit protein uL15 (RPL27A) (Encephalitozoon cuniculi (strain GB-M1) (Microsporidian parasite)).